A 206-amino-acid polypeptide reads, in one-letter code: Small ribosomal subunit protein uS4 (206 aa).

The 61-residue stretch at 96-156 folds into the S4 RNA-binding domain; the sequence is CRLDNVVYRM…EKAKNQLRIV (61 aa).

This sequence belongs to the universal ribosomal protein uS4 family. Part of the 30S ribosomal subunit. Contacts protein S5. The interaction surface between S4 and S5 is involved in control of translational fidelity.

Functionally, one of the primary rRNA binding proteins, it binds directly to 16S rRNA where it nucleates assembly of the body of the 30S subunit. In terms of biological role, with S5 and S12 plays an important role in translational accuracy. In Pseudomonas fluorescens (strain ATCC BAA-477 / NRRL B-23932 / Pf-5), this protein is Small ribosomal subunit protein uS4.